The primary structure comprises 337 residues: 3-isopropylmalate dehydrogenase (337 aa).

The substrate site is built by arginine 86, arginine 96, arginine 117, and aspartate 201. The Mg(2+) site is built by aspartate 201, aspartate 225, and aspartate 229. 258-270 (GAAFDIAGKNIGN) contacts NAD(+).

It belongs to the isocitrate and isopropylmalate dehydrogenases family. In terms of assembly, homotetramer. Requires Mg(2+) as cofactor. The cofactor is Mn(2+).

It localises to the cytoplasm. The catalysed reaction is (2R,3S)-3-isopropylmalate + NAD(+) = 4-methyl-2-oxopentanoate + CO2 + NADH. It functions in the pathway amino-acid biosynthesis; L-leucine biosynthesis; L-leucine from 3-methyl-2-oxobutanoate: step 3/4. Catalyzes the oxidation of 3-carboxy-2-hydroxy-4-methylpentanoate (3-isopropylmalate) to 3-carboxy-4-methyl-2-oxopentanoate. The product decarboxylates to 4-methyl-2 oxopentanoate. This Sulfurisphaera tokodaii (strain DSM 16993 / JCM 10545 / NBRC 100140 / 7) (Sulfolobus tokodaii) protein is 3-isopropylmalate dehydrogenase (leuB).